We begin with the raw amino-acid sequence, 439 residues long: Vacuolar protein sorting-associated protein 4 (439 aa).

One can recognise an MIT domain in the interval 8-75; it reads LSKGIDLVQK…TRAEQLKDHL (68 aa). Positions 76–113 are disordered; that stretch reads EKQAQNKSTAESSVNGSTKAKKSNGDGNGSGDDNDDAD. The segment covering 80-93 has biased composition (polar residues); sequence QNKSTAESSVNGST. Residue 175–182 participates in ATP binding; sequence GPPGTGKS.

This sequence belongs to the AAA ATPase family. As to quaternary structure, monomer or homodimer (in nucleotide-free form). Decamer, dodecamer or tetradecamer of two stacked respective homooligomeric rings (when bound to ATP); the dodecameric form seems to be predominant.

The protein resides in the endosome membrane. In terms of biological role, pre-vacuolar protein sorting protein involved in the transport of biosynthetic membrane proteins from the prevacuolar/endosomal compartment to the vacuole. Required for multivesicular body (MVB) protein sorting. Catalyzes the ATP-dependent dissociation of class E VPS proteins from endosomal membranes, such as the disassembly of the ESCRT-III complex. Required for extracellular secretion of the secreted aspartyl proteases SAP2, SAP4, SAP5, and SAP6. Its regulation of the pre-vacuolar secretory pathway is critical for virulence. This is Vacuolar protein sorting-associated protein 4 from Candida albicans (strain SC5314 / ATCC MYA-2876) (Yeast).